A 433-amino-acid chain; its full sequence is Alpha-(1,3)-fucosyltransferase fut-1 (433 aa).

At 1–12 (MTARSIKLFFAR) the chain is on the cytoplasmic side. Residues 13–32 (WKYLMFACCITYLLVIYAPI) traverse the membrane as a helical; Signal-anchor for type II membrane protein segment. The Lumenal portion of the chain corresponds to 33–433 (SKSEQKDWKE…GTLVDSIPLD (401 aa)). Residues Asn194 and Asn359 are each glycosylated (N-linked (GlcNAc...) asparagine).

Belongs to the glycosyltransferase 10 family. The cofactor is Mg(2+). Mn(2+) serves as cofactor. Post-translationally, N-glycosylated. Glycosylation is important for enzymatic activity. In terms of tissue distribution, expressed in the pharyngeal-intestinal (PI) and anal valves. Expressed in ASG neurons and in one or two neurons in the retrovesicular ganglion and two neurons posterior to the PI valve and PHA and PHB neurons in the tail.

The protein resides in the golgi apparatus. It localises to the golgi stack membrane. The enzyme catalyses N(4)-{beta-D-GlcNAc-(1-&gt;2)-alpha-D-Man-(1-&gt;3)-[beta-D-GlcNAc-(1-&gt;2)-alpha-D-Man-(1-&gt;6)]-beta-D-Man-(1-&gt;4)-beta-D-GlcNAc-(1-&gt;4)-beta-D-GlcNAc}-L-asparaginyl-[protein] + GDP-beta-L-fucose = N(4)-{beta-D-GlcNAc-(1-&gt;2)-alpha-D-Man-(1-&gt;3)-[beta-D-GlcNAc-(1-&gt;2)-alpha-D-Man-(1-&gt;6)]-beta-D-Man-(1-&gt;4)-beta-D-GlcNAc-(1-&gt;4)-[alpha-L-Fuc(1-&gt;3)]-beta-D-GlcNAc}-L-asparaginyl-[protein] + GDP + H(+). Its pathway is protein modification; protein glycosylation. Its activity is regulated as follows. Inhibited by Cu(2+) or Zn(2+) and to a lesser extent Ni(2+) ions. Its function is as follows. Preferentially catalyzes the addition of fucose in alpha 1-3 linkage to the first GlcNAc residue (with or without alpha 1,6-linked fucose), next to the peptide chains in N-glycans. Unlike in mammals, does not require the prior action of N-acetylglucosaminyltransferase I to generate complex N-glycans. This is Alpha-(1,3)-fucosyltransferase fut-1 from Caenorhabditis elegans.